We begin with the raw amino-acid sequence, 288 residues long: ATP synthase gamma chain (288 aa).

The protein belongs to the ATPase gamma chain family. In terms of assembly, F-type ATPases have 2 components, CF(1) - the catalytic core - and CF(0) - the membrane proton channel. CF(1) has five subunits: alpha(3), beta(3), gamma(1), delta(1), epsilon(1). CF(0) has three main subunits: a, b and c.

The protein localises to the cell inner membrane. Functionally, produces ATP from ADP in the presence of a proton gradient across the membrane. The gamma chain is believed to be important in regulating ATPase activity and the flow of protons through the CF(0) complex. The sequence is that of ATP synthase gamma chain from Vesicomyosocius okutanii subsp. Calyptogena okutanii (strain HA).